Reading from the N-terminus, the 187-residue chain is ESPLPKPVLDTNGKELNPNSSYRIISIGAGALGGDVYLGKSPNSDAPCPDGVFRYNSDVGPSGTPVRFIPLSGGIFEDQLLNIQFNIPTVKLCVSYTIWKVGNLNAYFRTMLLETGGTIGQADNSYFKIVKLSNFGYNLLSCPFTSIICLRCPEDQFCAKVGVVIQNGKRRLALVNENPLDVLFQEV.

N-linked (GlcNAc...) asparagine glycosylation occurs at N19. Disulfide bonds link C48–C93 and C142–C158.

Belongs to the protease inhibitor I3 (leguminous Kunitz-type inhibitor) family. In terms of processing, glycosylated. In terms of tissue distribution, tubers.

The protein resides in the vacuole. In terms of biological role, inhibitor of cathepsin D (aspartic protease) and trypsin (serine protease). May protect the plant by inhibiting proteases of invading organisms. The polypeptide is Aspartic protease inhibitor 9 (Solanum tuberosum (Potato)).